The following is a 487-amino-acid chain: Beta-barrel assembly-enhancing protease (487 aa).

Residues Met1–Ala27 form the signal peptide. Residue His136 coordinates Zn(2+). The active site involves Glu137. His140 and Glu201 together coordinate Zn(2+). The Proton donor role is filled by Asp205. TPR repeat units lie at residues Arg309–Asn342, Trp344–Pro376, Val377–Asp409, and Asp427–Gly460.

It belongs to the peptidase M48 family. BepA subfamily. In terms of assembly, interacts with BamA and LoiP. The cofactor is Zn(2+).

Its subcellular location is the periplasm. Its activity is regulated as follows. Protease activity is inhibited by the metal chelating reagents 1,10-phenanthroline and EDTA. In terms of biological role, functions both as a chaperone and a metalloprotease. Maintains the integrity of the outer membrane by promoting either the assembly or the elimination of outer membrane proteins, depending on their folding state. Promotes disulfide rearrangement of LptD during its biogenesis, and proteolytic degradation of LptD and BamA when their proper assembly is compromised. May facilitate membrane attachment of LoiP under unfavorable conditions. This chain is Beta-barrel assembly-enhancing protease, found in Escherichia coli (strain K12).